Here is a 115-residue protein sequence, read N- to C-terminus: Phosphoribosyl-AMP cyclohydrolase (115 aa).

D80 contributes to the Mg(2+) binding site. C81 serves as a coordination point for Zn(2+). D82 and D84 together coordinate Mg(2+). Zn(2+) contacts are provided by C97 and C104.

Belongs to the PRA-CH family. Homodimer. Mg(2+) serves as cofactor. The cofactor is Zn(2+).

The protein resides in the cytoplasm. The enzyme catalyses 1-(5-phospho-beta-D-ribosyl)-5'-AMP + H2O = 1-(5-phospho-beta-D-ribosyl)-5-[(5-phospho-beta-D-ribosylamino)methylideneamino]imidazole-4-carboxamide. It participates in amino-acid biosynthesis; L-histidine biosynthesis; L-histidine from 5-phospho-alpha-D-ribose 1-diphosphate: step 3/9. Its function is as follows. Catalyzes the hydrolysis of the adenine ring of phosphoribosyl-AMP. In Rhodococcus erythropolis (strain PR4 / NBRC 100887), this protein is Phosphoribosyl-AMP cyclohydrolase.